The following is a 1379-amino-acid chain: Vascular endothelial growth factor receptor 3 (1379 aa).

The first 19 residues, 1–19 (MKRVCTLPLWLWLGIVSEA), serve as a signal peptide directing secretion. At 20–788 (DLVSSYSMTP…EGSDDKTNVE (769 aa)) the chain is on the extracellular side. Ig-like C2-type domains are found at residues 30–136 (PTLS…TAVS), 160–222 (KENT…IDNK), 240–335 (DIQL…TDVI), 340–421 (PFIN…KRIS), 430–566 (PRIH…FYVT), 569–684 (PDGF…KYIS), and 691–777 (PRLK…ASVS). Intrachain disulfides connect C51–C120 and C167–C215. The interval 73–93 (RRWNSQPQQRPVGAGNPEEDC) is disordered. Residues N113, N175, N260, and N308 are each glycosylated (N-linked (GlcNAc...) asparagine). A disulfide bond links C261 and C319. 3 disulfides stabilise this stretch: C453-C548, C474-C500, and C592-C666. N-linked (GlcNAc...) asparagine glycans are attached at residues N529, N541, N596, N608, N655, N696, and N703. C712 and C761 are joined by a disulfide. N771 carries an N-linked (GlcNAc...) asparagine glycan. The helical transmembrane segment at 789–809 (IVILIGTGVIAVFFWILLIII) threads the bilayer. At 810 to 1379 (FCNIKRPAHA…LHASFFSEQY (570 aa)) the chain is on the cytoplasmic side. The Protein kinase domain occupies 858–1185 (LRLGKVLGHG…DLVEILGNLL (328 aa)). ATP contacts are provided by residues 864–872 (LGHGAFGKV) and K892. D1049 acts as the Proton acceptor in catalysis. Residues Y1075 and Y1080 each carry the phosphotyrosine; by autocatalysis modification. Residues 1196-1224 (YIPLNDSHSSEDDGFSQVPSSAQQNSDEE) form a disordered region. Residues Y1239, Y1240, Y1274, Y1342, and Y1346 each carry the phosphotyrosine; by autocatalysis modification. A disordered region spans residues 1299–1379 (RHRKEGGFSS…LHASFFSEQY (81 aa)). Over residues 1332–1343 (YGSQVGGQTFYN) the composition is skewed to polar residues.

The protein belongs to the protein kinase superfamily. Tyr protein kinase family. CSF-1/PDGF receptor subfamily. As to quaternary structure, interacts with VEGFC and VEGFD. Monomer in the absence of bound VEGFC or VEGFD. Homodimer in the presence of bound VEGFC or VEGFD. Autophosphorylated on tyrosine residues upon ligand binding. Autophosphorylation occurs in trans, i.e. one subunit of the dimeric receptor phosphorylates tyrosine residues on the other subunit.

It is found in the cell membrane. Its subcellular location is the cytoplasm. The protein resides in the nucleus. The enzyme catalyses L-tyrosyl-[protein] + ATP = O-phospho-L-tyrosyl-[protein] + ADP + H(+). Its activity is regulated as follows. Present in an inactive conformation in the absence of bound ligand. Binding of VEGFC or VEGFD leads to dimerization and activation by autophosphorylation on tyrosine residues. Tyrosine-protein kinase that acts as a cell-surface receptor for VEGFC and VEGFD, and plays an essential role in lymphangiogenesis and in the development of the vascular network and the cardiovascular system during embryonic development. Promotes proliferation, survival and migration of endothelial cells, and regulates angiogenic sprouting. Mediates activation of the MAPK1/ERK2, MAPK3/ERK1 signaling pathway, of MAPK8 and the JUN signaling pathway, and of the AKT1 signaling pathway. The polypeptide is Vascular endothelial growth factor receptor 3 (FLT4) (Coturnix coturnix (Common quail)).